A 388-amino-acid chain; its full sequence is Beta-1,4-galactosyltransferase 5 (388 aa).

The Cytoplasmic segment spans residues 1 to 14 (MRARRGLLRLPRRS). A helical; Signal-anchor for type II membrane protein membrane pass occupies residues 15 to 35 (LLAALFFFSLSSSLLYFVYVA). At 36–388 (PGIVNTYLFM…TPELAQVTEY (353 aa)) the chain is on the lumenal side. 4 N-linked (GlcNAc...) asparagine glycosylation sites follow: N77, N81, N90, and N128. C114 and C158 form a disulfide bridge. UDP-alpha-D-galactose contacts are provided by residues 169–173 (PFRNR), 208–210 (FNR), 235–236 (VD), Y264, and W296. A disulfide bridge connects residues C229 and C248. D236 contacts Mn(2+). 298 to 301 (GEDD) contributes to the N-acetyl-D-glucosamine binding site. H329 is a Mn(2+) binding site. 329-330 (HH) provides a ligand contact to UDP-alpha-D-galactose. An N-acetyl-D-glucosamine-binding site is contributed by R340. Residues N360, N364, and N373 are each glycosylated (N-linked (GlcNAc...) asparagine).

It belongs to the glycosyltransferase 7 family. Requires Mn(2+) as cofactor. Highest levels in heart, brain, liver and kidney with lower levels in spleen, lung and testis.

It is found in the golgi apparatus. Its subcellular location is the golgi stack membrane. The catalysed reaction is a beta-D-glucosyl-(1&lt;-&gt;1')-N-acylsphing-4-enine + UDP-alpha-D-galactose = a beta-D-Gal-(1-&gt;4)-beta-D-Glc-(1&lt;-&gt;1)-Cer(d18:1(4E)) + UDP + H(+). Its pathway is protein modification; protein glycosylation. It participates in sphingolipid metabolism. In terms of biological role, catalyzes the synthesis of lactosylceramide (LacCer) via the transfer of galactose from UDP-galactose to glucosylceramide (GlcCer). LacCer is the starting point in the biosynthesis of all gangliosides (membrane-bound glycosphingolipids) which play pivotal roles in the CNS including neuronal maturation and axonal and myelin formation. Plays a role in the glycosylation of BMPR1A and regulation of its protein stability. Essential for extraembryonic development during early embryogenesis. The sequence is that of Beta-1,4-galactosyltransferase 5 from Mus musculus (Mouse).